We begin with the raw amino-acid sequence, 633 residues long: Guanylate-binding protein 6 (633 aa).

Positions 1-310 (MESGPKMLAP…EAVNSGAVPC (310 aa)) are GTPase domain (Globular). The GB1/RHD3-type G domain occupies 35–277 (SQPVVVVAIV…FSSYIFTHAR (243 aa)). Residues 45–52 (GLYRTGKS), 67–69 (LGS), and 97–101 (DTEGL) each bind GTP.

Belongs to the TRAFAC class dynamin-like GTPase superfamily. GB1/RHD3 GTPase family. GB1 subfamily.

It is found in the cytoplasmic vesicle. The enzyme catalyses GTP + H2O = GDP + phosphate + H(+). In terms of biological role, interferon (IFN)-inducible GTPase that plays important roles in innate immunity against a diverse range of bacterial, viral and protozoan pathogens, such as bacterial pathogens Listeria monocytogenes and Mycobacterium bovis BCG as well as the protozoan pathogen Toxoplasma gondii. Confers protection to several pathogens, including the bacterial pathogens Listeria monocytogenes and Mycobacterium bovis BCG as well as the protozoan pathogen Toxoplasma gondii. In Pongo abelii (Sumatran orangutan), this protein is Guanylate-binding protein 6 (GBP6).